The chain runs to 661 residues: Transketolase (661 aa).

Histidine 28 lines the substrate pocket. Thiamine diphosphate is bound by residues histidine 68 and 116-118 (GPL). Glutamate 157 contributes to the Mg(2+) binding site. The thiamine diphosphate site is built by glycine 158 and asparagine 187. Mg(2+) contacts are provided by asparagine 187 and isoleucine 189. Substrate contacts are provided by histidine 261 and arginine 358. Histidine 261 is a thiamine diphosphate binding site. Catalysis depends on glutamate 412, which acts as the Proton donor. Phenylalanine 438 lines the thiamine diphosphate pocket. Histidine 462, aspartate 470, and arginine 521 together coordinate substrate.

The protein belongs to the transketolase family. Homodimer. It depends on Mg(2+) as a cofactor. Requires Ca(2+) as cofactor. The cofactor is Mn(2+). Co(2+) serves as cofactor. Thiamine diphosphate is required as a cofactor.

The catalysed reaction is D-sedoheptulose 7-phosphate + D-glyceraldehyde 3-phosphate = aldehydo-D-ribose 5-phosphate + D-xylulose 5-phosphate. Functionally, catalyzes the transfer of a two-carbon ketol group from a ketose donor to an aldose acceptor, via a covalent intermediate with the cofactor thiamine pyrophosphate. This chain is Transketolase (tkt), found in Treponema pallidum (strain Nichols).